The sequence spans 1661 residues: Pentafunctional AROM polypeptide (1661 aa).

The tract at residues 1-388 is 3-dehydroquinate synthase; that stretch reads MATNGVKAEP…YEKKASSVVD (388 aa). NAD(+) is bound by residues 50–52, 87–90, 118–120, and Asp-123; these read DTN, ETSK, and GGV. Arg-134 lines the 7-phospho-2-dehydro-3-deoxy-D-arabino-heptonate pocket. NAD(+) is bound at residue 143-144; sequence TT. Residues Asp-150 and Lys-156 each coordinate 7-phospho-2-dehydro-3-deoxy-D-arabino-heptonate. Lys-165 is an NAD(+) binding site. Asn-166 provides a ligand contact to 7-phospho-2-dehydro-3-deoxy-D-arabino-heptonate. Residues 183 to 186 and Asn-194 each bind NAD(+); that span reads FLET. Glu-198 is a binding site for Zn(2+). 7-phospho-2-dehydro-3-deoxy-D-arabino-heptonate-binding positions include 198-201 and Lys-254; that span reads EVVK. Glu-264 functions as the Proton acceptor; for 3-dehydroquinate synthase activity in the catalytic mechanism. Residues 268–272 and His-275 each bind 7-phospho-2-dehydro-3-deoxy-D-arabino-heptonate; that span reads RNLLN. His-275 contacts Zn(2+). His-279 acts as the Proton acceptor; for 3-dehydroquinate synthase activity in catalysis. His-291 and Lys-360 together coordinate 7-phospho-2-dehydro-3-deoxy-D-arabino-heptonate. Position 291 (His-291) interacts with Zn(2+). Residues 401–850 form an EPSP synthase region; sequence VHPGIPSDLN…WDILNQQFKA (450 aa). Cys-832 functions as the For EPSP synthase activity in the catalytic mechanism. Residues 872–1064 are shikimate kinase; the sequence is QKSIFIIGMR…KKKKQSFFVC (193 aa). ATP is bound at residue 879–886; it reads GMRGAGKT. Residues 1065–1285 are 3-dehydroquinase; that stretch reads LSAPNLEPCA…TAPGQLSAAD (221 aa). His-1188 (proton acceptor; for 3-dehydroquinate dehydratase activity) is an active-site residue. Lys-1216 functions as the Schiff-base intermediate with substrate; for 3-dehydroquinate dehydratase activity in the catalytic mechanism. The segment at 1298-1661 is shikimate dehydrogenase; the sequence is TKKFCIFGSP…LTYSWSLGDW (364 aa).

In the N-terminal section; belongs to the sugar phosphate cyclases superfamily. Dehydroquinate synthase family. This sequence in the 2nd section; belongs to the EPSP synthase family. It in the 3rd section; belongs to the shikimate kinase family. The protein in the 4th section; belongs to the type-I 3-dehydroquinase family. In the C-terminal section; belongs to the shikimate dehydrogenase family. Homodimer. It depends on Zn(2+) as a cofactor.

Its subcellular location is the cytoplasm. It carries out the reaction 7-phospho-2-dehydro-3-deoxy-D-arabino-heptonate = 3-dehydroquinate + phosphate. It catalyses the reaction 3-dehydroquinate = 3-dehydroshikimate + H2O. The catalysed reaction is shikimate + NADP(+) = 3-dehydroshikimate + NADPH + H(+). The enzyme catalyses shikimate + ATP = 3-phosphoshikimate + ADP + H(+). It carries out the reaction 3-phosphoshikimate + phosphoenolpyruvate = 5-O-(1-carboxyvinyl)-3-phosphoshikimate + phosphate. It functions in the pathway metabolic intermediate biosynthesis; chorismate biosynthesis; chorismate from D-erythrose 4-phosphate and phosphoenolpyruvate: step 2/7. It participates in metabolic intermediate biosynthesis; chorismate biosynthesis; chorismate from D-erythrose 4-phosphate and phosphoenolpyruvate: step 3/7. Its pathway is metabolic intermediate biosynthesis; chorismate biosynthesis; chorismate from D-erythrose 4-phosphate and phosphoenolpyruvate: step 4/7. The protein operates within metabolic intermediate biosynthesis; chorismate biosynthesis; chorismate from D-erythrose 4-phosphate and phosphoenolpyruvate: step 5/7. It functions in the pathway metabolic intermediate biosynthesis; chorismate biosynthesis; chorismate from D-erythrose 4-phosphate and phosphoenolpyruvate: step 6/7. Its function is as follows. The AROM polypeptide catalyzes 5 consecutive enzymatic reactions in prechorismate polyaromatic amino acid biosynthesis. This Phaeosphaeria nodorum (strain SN15 / ATCC MYA-4574 / FGSC 10173) (Glume blotch fungus) protein is Pentafunctional AROM polypeptide.